We begin with the raw amino-acid sequence, 209 residues long: Protein bli-3 (209 aa).

A compositionally biased stretch (polar residues) spans 1–11 (MSGQGFSNADT). The tract at residues 1 to 24 (MSGQGFSNADTGNKPADPYKQANL) is disordered.

In Neurospora crassa (strain ATCC 24698 / 74-OR23-1A / CBS 708.71 / DSM 1257 / FGSC 987), this protein is Protein bli-3 (bli-3).